Here is an 81-residue protein sequence, read N- to C-terminus: Metallocarboxypeptidase inhibitor (81 aa).

A signal peptide spans 1 to 15 (MFLLVFLCCLHLVIS). Disulfide bonds link cysteine 25/cysteine 48, cysteine 32/cysteine 76, cysteine 33/cysteine 57, and cysteine 36/cysteine 72.

In terms of biological role, tightly binding, competitive inhibitor of different types of pancreatic-like carboxypeptidases. Inhibits human CPA4. This Hirudo medicinalis (Medicinal leech) protein is Metallocarboxypeptidase inhibitor.